Reading from the N-terminus, the 337-residue chain is Pyridoxal 5'-phosphate synthase subunit PdxS (337 aa).

Aspartate 65 is a binding site for D-ribose 5-phosphate. Lysine 122 acts as the Schiff-base intermediate with D-ribose 5-phosphate in catalysis. Glycine 194 contributes to the D-ribose 5-phosphate binding site. Lysine 206 serves as a coordination point for D-glyceraldehyde 3-phosphate. Residues glycine 255 and 276 to 277 each bind D-ribose 5-phosphate; that span reads GS.

It belongs to the PdxS/SNZ family. In the presence of PdxT, forms a dodecamer of heterodimers.

The enzyme catalyses aldehydo-D-ribose 5-phosphate + D-glyceraldehyde 3-phosphate + L-glutamine = pyridoxal 5'-phosphate + L-glutamate + phosphate + 3 H2O + H(+). It participates in cofactor biosynthesis; pyridoxal 5'-phosphate biosynthesis. Catalyzes the formation of pyridoxal 5'-phosphate from ribose 5-phosphate (RBP), glyceraldehyde 3-phosphate (G3P) and ammonia. The ammonia is provided by the PdxT subunit. Can also use ribulose 5-phosphate and dihydroxyacetone phosphate as substrates, resulting from enzyme-catalyzed isomerization of RBP and G3P, respectively. This chain is Pyridoxal 5'-phosphate synthase subunit PdxS, found in Pyrobaculum arsenaticum (strain DSM 13514 / JCM 11321 / PZ6).